A 300-amino-acid chain; its full sequence is tRNA pseudouridine synthase B (300 aa).

The active-site Nucleophile is aspartate 41.

It belongs to the pseudouridine synthase TruB family. Type 1 subfamily.

It catalyses the reaction uridine(55) in tRNA = pseudouridine(55) in tRNA. Responsible for synthesis of pseudouridine from uracil-55 in the psi GC loop of transfer RNAs. The chain is tRNA pseudouridine synthase B from Synechococcus sp. (strain WH7803).